A 438-amino-acid chain; its full sequence is Glutamate-1-semialdehyde 2,1-aminomutase (438 aa).

Lysine 274 carries the post-translational modification N6-(pyridoxal phosphate)lysine.

Belongs to the class-III pyridoxal-phosphate-dependent aminotransferase family. HemL subfamily. As to quaternary structure, homodimer. It depends on pyridoxal 5'-phosphate as a cofactor.

The protein resides in the cytoplasm. The enzyme catalyses (S)-4-amino-5-oxopentanoate = 5-aminolevulinate. Its pathway is porphyrin-containing compound metabolism; protoporphyrin-IX biosynthesis; 5-aminolevulinate from L-glutamyl-tRNA(Glu): step 2/2. The protein is Glutamate-1-semialdehyde 2,1-aminomutase of Salinibacter ruber (strain DSM 13855 / M31).